Reading from the N-terminus, the 63-residue chain is Large ribosomal subunit protein uL29 (63 aa).

It belongs to the universal ribosomal protein uL29 family.

The chain is Large ribosomal subunit protein uL29 from Marinomonas sp. (strain MWYL1).